The primary structure comprises 245 residues: Inner membrane protein YgaZ (245 aa).

Residues 1–24 lie on the Cytoplasmic side of the membrane; the sequence is MESPTPQPAPGSATFMEGCKDSLP. Residues 25–45 form a helical membrane-spanning segment; the sequence is IVISYIPVAFAFGLNATRLGF. The Periplasmic segment spans residues 46–63; sequence SPLESVFFSCIIYAGASQ. Residues 64 to 84 traverse the membrane as a helical segment; it reads FVITAMLAAGSSLWIAALTVM. Over 85–109 the chain is Cytoplasmic; it reads AMDVRHVLYGPSLRSRIIQRLQKSK. The chain crosses the membrane as a helical span at residues 110–130; the sequence is TALWAFGLTDEVFAAATAKLV. Residues 131–140 lie on the Periplasmic side of the membrane; it reads RNNRRWSENW. A helical membrane pass occupies residues 141-161; sequence MIGIAFSSWSSWVFGTVIGAF. Residues 162–172 are Cytoplasmic-facing; that stretch reads SGSGLLQGYPA. A helical membrane pass occupies residues 173–193; that stretch reads VEAALGFMLPALFMSFLLASF. Residues 194–205 are Periplasmic-facing; sequence QRKQSLCVTAAL. Residues 206-226 traverse the membrane as a helical segment; the sequence is VGALAGVTLFSIPVAILAGIV. Residues 227-245 lie on the Cytoplasmic side of the membrane; the sequence is CGCLTALIQAFWQGAPDEL.

This sequence belongs to the AzlC family.

The protein resides in the cell inner membrane. This Escherichia coli (strain K12) protein is Inner membrane protein YgaZ (ygaZ).